We begin with the raw amino-acid sequence, 348 residues long: Ileal sodium/bile acid cotransporter (348 aa).

Residues 1–28 (MDNSSVCPPNATVCEGDSCVVPESNFNA) lie on the Extracellular side of the membrane. N-linked (GlcNAc...) asparagine glycans are attached at residues asparagine 3 and asparagine 10. A helical membrane pass occupies residues 29-49 (ILNTVMSTVLTILLAMVMFSM). Residues 50-87 (GCNVEVHKFLGHIKRPWGIFVGFLCQFGIMPLTGFILS) are Cytoplasmic-facing. A helical transmembrane segment spans residues 88 to 108 (VASGILPVQAVVVLIMGCCPG). The Extracellular segment spans residues 109 to 126 (GTGSNILAYWIDGDMDLS). A helical transmembrane segment spans residues 127–147 (VSMTTCSTLLALGMMPLCLFV). The Cytoplasmic segment spans residues 148-157 (YTKMWVDSGT). The helical transmembrane segment at 158 to 178 (IVIPYDSIGISLVALVIPVSF) threads the bilayer. The Extracellular segment spans residues 179-195 (GMFVNHKWPQKAKIILK). Residues 196–216 (IGSITGVILIVLIAVIGGILY) traverse the membrane as a helical segment. Over 217-224 (QSAWIIEP) the chain is Cytoplasmic. The helical transmembrane segment at 225 to 245 (KLWIIGTIFPIAGYSLGFFLA) threads the bilayer. Residues 246 to 284 (RLAGQPWYRCRTVALETGMQNTQLCSTIVQLSFSPEDLN) lie on the Extracellular side of the membrane. Residues 285-305 (LVFTFPLIYTVFQLVFAAVIL) form a helical membrane-spanning segment. Over 306 to 348 (GIYVTYRKCYGKNDAEFLEKTDNEMDSRPSFDETNKGFQPDEK) the chain is Cytoplasmic. Residues 328–348 (NEMDSRPSFDETNKGFQPDEK) are disordered. Residue serine 335 is modified to Phosphoserine.

This sequence belongs to the bile acid:sodium symporter (BASS) (TC 2.A.28) family. As to quaternary structure, monomer and homodimer. In terms of tissue distribution, expressed in ileum.

Its subcellular location is the membrane. The catalysed reaction is taurocholate(out) + 2 Na(+)(out) = taurocholate(in) + 2 Na(+)(in). It carries out the reaction cholate(out) + 2 Na(+)(out) = cholate(in) + 2 Na(+)(in). The enzyme catalyses taurochenodeoxycholate(out) + 2 Na(+)(out) = taurochenodeoxycholate(in) + 2 Na(+)(in). It catalyses the reaction tauroursodeoxycholate(out) + 2 Na(+)(out) = tauroursodeoxycholate(in) + 2 Na(+)(in). The catalysed reaction is glycocholate(out) + 2 Na(+)(out) = glycocholate(in) + 2 Na(+)(in). It carries out the reaction tauronorcholate(out) + 2 Na(+)(out) = tauronorcholate(in) + 2 Na(+)(in). The enzyme catalyses tauroallocholate(out) + 2 Na(+)(out) = tauroallocholate(in) + 2 Na(+)(in). It catalyses the reaction taurodeoxycholate(out) + 2 Na(+)(out) = taurodeoxycholate(in) + 2 Na(+)(in). The catalysed reaction is tauro-beta-muricholate(out) + 2 Na(+)(out) = tauro-beta-muricholate(in) + 2 Na(+)(in). Functionally, plays a critical role in the sodium-dependent reabsorption of bile acids from the lumen of the small intestine. Transports various bile acids, unconjugated or conjugated, such as cholate and taurocholate. Also responsible for bile acid transport in the renal proximal tubules, a salvage mechanism that helps conserve bile acids. Works collaboratively with the Na(+)-taurocholate cotransporting polypeptide (NTCP), the organic solute transporter (OST), and the bile salt export pump (BSEP), to ensure efficacious biological recycling of bile acids during enterohepatic circulation. The protein is Ileal sodium/bile acid cotransporter (Slc10a2) of Mus musculus (Mouse).